We begin with the raw amino-acid sequence, 72 residues long: MKQDIHPKYTKVTVTCANCGKDFETRSTRSSIKVDICSNCHPFYTGKQVLVDTAGRVERFKKRFAKATSQSK.

This sequence belongs to the bacterial ribosomal protein bL31 family. Type A subfamily. Part of the 50S ribosomal subunit.

In terms of biological role, binds the 23S rRNA. The protein is Large ribosomal subunit protein bL31 of Prosthecochloris aestuarii (strain DSM 271 / SK 413).